A 467-amino-acid chain; its full sequence is Envelope glycoprotein M (467 aa).

At 1 to 32 the chain is on the intravirion side; sequence MGRRAPRGSPEAAPGADVAPGARAAWWVWCVQ. Residues 33-53 form a helical membrane-spanning segment; that stretch reads VATFIVSAICVVGLLVLASVF. Residues 54-90 are Virion surface-facing; it reads RDRFPCLYAPATSYAKANATVEVRGGVAVPLRLDTQS. Residues 91 to 111 form a helical membrane-spanning segment; the sequence is LLATYAITSTLLLAAAVYAAV. Residues 112–137 lie on the Intravirion side of the membrane; the sequence is GAVTSRYERALDAARRLAAARMAMPH. A helical transmembrane segment spans residues 138–158; the sequence is ATLIAGNVCAWLLQITVLLLA. The Virion surface segment spans residues 159–163; it reads HRISQ. Residues 164 to 184 form a helical membrane-spanning segment; it reads LAHLIYVLHFACLVYLAAHFC. Residues 185–220 lie on the Intravirion side of the membrane; that stretch reads TRGVLSGTYLRQVHGLIDPAPTHHRIVGPVRAVMTN. Residues 221–241 traverse the membrane as a helical segment; sequence ALLLGTLLCTAAAAVSLNTIA. At 242–250 the chain is on the virion surface side; the sequence is ALNFNFSAP. The chain crosses the membrane as a helical span at residues 251 to 271; sequence SMLICLTTLFALLVVSLLLVV. Residues 272-280 lie on the Intravirion side of the membrane; the sequence is EGVLCHYVR. Residues 281-301 form a helical membrane-spanning segment; sequence VLVGPHLGAIAATGIVGLACE. The Virion surface portion of the chain corresponds to 302 to 318; it reads HYHTGGYYVVEQQWPGA. A helical membrane pass occupies residues 319-339; that stretch reads QTGVRVALALVAAFALAMAVL. Residues 340 to 467 are Intravirion-facing; it reads RCTRAYLYHR…EPVYSTVRRW (128 aa). Residues 371–381 are compositionally biased toward basic residues; it reads RRVRSSMRGSR. 2 disordered regions span residues 371-395 and 432-459; these read RRVR…AETP and VQRP…AGEP.

This sequence belongs to the herpesviridae glycoprotein M family. In terms of assembly, interacts (via N-terminus) with gN (via N-terminus). The gM-gN heterodimer forms the gCII complex.

It localises to the virion membrane. The protein localises to the host Golgi apparatus. Its subcellular location is the host trans-Golgi network. It is found in the host endosome membrane. The protein resides in the host nucleus inner membrane. Envelope glycoprotein important for virion assembly and egress. Plays a role in the correct incorporation of gH-gL into virion membrane. Directs the glycoprotein N (gN) to the host trans-Golgi network. The protein is Envelope glycoprotein M of Human herpesvirus 2 (strain HG52) (HHV-2).